Here is a 302-residue protein sequence, read N- to C-terminus: Sulfate adenylyltransferase subunit 2 (302 aa).

A disordered region spans residues 280–302 (RQGRAIDHDQSGSMELKKRQGYF).

It belongs to the PAPS reductase family. CysD subfamily. As to quaternary structure, heterodimer composed of CysD, the smaller subunit, and CysN.

It carries out the reaction sulfate + ATP + H(+) = adenosine 5'-phosphosulfate + diphosphate. The protein operates within sulfur metabolism; hydrogen sulfide biosynthesis; sulfite from sulfate: step 1/3. In terms of biological role, with CysN forms the ATP sulfurylase (ATPS) that catalyzes the adenylation of sulfate producing adenosine 5'-phosphosulfate (APS) and diphosphate, the first enzymatic step in sulfur assimilation pathway. APS synthesis involves the formation of a high-energy phosphoric-sulfuric acid anhydride bond driven by GTP hydrolysis by CysN coupled to ATP hydrolysis by CysD. In Vibrio cholerae serotype O1 (strain ATCC 39541 / Classical Ogawa 395 / O395), this protein is Sulfate adenylyltransferase subunit 2.